Consider the following 249-residue polypeptide: Quinate/shikimate dehydrogenase (249 aa).

2 residues coordinate substrate: lysine 32 and aspartate 68. NAD(+)-binding positions include 93-96, 116-119, lysine 166, 193-196, and glycine 216; these read AGGA, NRRD, and CVYN.

It belongs to the shikimate dehydrogenase family. Homodimer.

It catalyses the reaction L-quinate + NAD(+) = 3-dehydroquinate + NADH + H(+). It carries out the reaction L-quinate + NADP(+) = 3-dehydroquinate + NADPH + H(+). The catalysed reaction is shikimate + NADP(+) = 3-dehydroshikimate + NADPH + H(+). The enzyme catalyses shikimate + NAD(+) = 3-dehydroshikimate + NADH + H(+). Its pathway is metabolic intermediate biosynthesis; chorismate biosynthesis; chorismate from D-erythrose 4-phosphate and phosphoenolpyruvate: step 4/7. Functionally, the actual biological function of YdiB remains unclear, nor is it known whether 3-dehydroshikimate or quinate represents the natural substrate. Catalyzes the reversible NAD-dependent reduction of both 3-dehydroshikimate (DHSA) and 3-dehydroquinate to yield shikimate (SA) and quinate, respectively. It can use both NAD or NADP for catalysis, however it has higher catalytic efficiency with NAD. In Shigella flexneri serotype 5b (strain 8401), this protein is Quinate/shikimate dehydrogenase.